The primary structure comprises 1224 residues: Protein MSN5 (1224 aa).

Residues 1200 to 1224 (NKENGDMLDDPNIEDGAVGNLFDDN) are disordered.

In terms of assembly, interacts with CEX1.

The sequence is that of Protein MSN5 (MSN5) from Saccharomyces cerevisiae (strain ATCC 204508 / S288c) (Baker's yeast).